A 349-amino-acid polypeptide reads, in one-letter code: UDP-galactose/UDP-glucose transporter 4 (349 aa).

8 consecutive transmembrane segments (helical) span residues 23–43, 56–76, 115–135, 140–160, 167–187, 205–225, 248–268, and 293–313; these read WQQF…NGIC, GWYF…MYGF, IMFK…IPGL, PVHE…FTLA, NFSI…AFLG, MLFC…ILTG, AMAT…FGAA, and LTEQ…LKMV. The segment at 316-349 is disordered; that stretch reads PNPNPKSSGSGQTPGKLERVKFEKEDDEESRPLV. The segment covering 340-349 has biased composition (acidic residues); it reads EDDEESRPLV.

Belongs to the nucleotide-sugar transporter family. UDP-galactose:UMP antiporter (TC 2.A.7.11) subfamily.

Its subcellular location is the membrane. Functionally, sugar transporter involved in the transport of nucleotide-sugars from cytoplasm into the Golgi and/or the endoplasmic reticulum. This Arabidopsis thaliana (Mouse-ear cress) protein is UDP-galactose/UDP-glucose transporter 4.